Here is a 762-residue protein sequence, read N- to C-terminus: 5-methyltetrahydropteroyltriglutamate--homocysteine methyltransferase (762 aa).

5-methyltetrahydropteroyltri-L-glutamate contacts are provided by residues 17–20 (REWK) and K111. Residues 435 to 437 (IGS) and E488 each bind L-homocysteine. Residues 435 to 437 (IGS) and E488 contribute to the L-methionine site. 5-methyltetrahydropteroyltri-L-glutamate is bound by residues 519–520 (RC) and W565. D603 serves as a coordination point for L-homocysteine. Residue D603 participates in L-methionine binding. E609 contacts 5-methyltetrahydropteroyltri-L-glutamate. H645, C647, and E669 together coordinate Zn(2+). Catalysis depends on H698, which acts as the Proton donor. A Zn(2+)-binding site is contributed by C730.

The protein belongs to the vitamin-B12 independent methionine synthase family. Requires Zn(2+) as cofactor.

It catalyses the reaction 5-methyltetrahydropteroyltri-L-glutamate + L-homocysteine = tetrahydropteroyltri-L-glutamate + L-methionine. The protein operates within amino-acid biosynthesis; L-methionine biosynthesis via de novo pathway; L-methionine from L-homocysteine (MetE route): step 1/1. Its function is as follows. Catalyzes the transfer of a methyl group from 5-methyltetrahydrofolate to homocysteine resulting in methionine formation. This Bacillus cereus (strain ATCC 10987 / NRS 248) protein is 5-methyltetrahydropteroyltriglutamate--homocysteine methyltransferase.